Reading from the N-terminus, the 270-residue chain is UPF0354 protein BC_4690 (270 aa).

Belongs to the UPF0354 family.

This chain is UPF0354 protein BC_4690, found in Bacillus cereus (strain ATCC 14579 / DSM 31 / CCUG 7414 / JCM 2152 / NBRC 15305 / NCIMB 9373 / NCTC 2599 / NRRL B-3711).